The chain runs to 1608 residues: DNA-directed RNA polymerase III subunit rpc2 (1608 aa).

Zn(2+) is bound by residues Cys-1557, Cys-1560, Cys-1569, and Cys-1572. The C4-type zinc-finger motif lies at 1557–1572 (CKNCGFLGYEGYCQYC).

Belongs to the RNA polymerase beta chain family. As to quaternary structure, component of the RNA polymerase III (Pol III) complex. Post-translationally, this protein undergoes a protein self splicing that involves a post-translational excision of the intervening region (intein) followed by peptide ligation.

The protein resides in the nucleus. It carries out the reaction RNA(n) + a ribonucleoside 5'-triphosphate = RNA(n+1) + diphosphate. In terms of biological role, DNA-dependent RNA polymerase catalyzes the transcription of DNA into RNA using the four ribonucleoside triphosphates as substrates. Second largest core component of RNA polymerase III which synthesizes small RNAs, such as 5S rRNA and tRNAs. Proposed to contribute to the polymerase catalytic activity and forms the polymerase active center together with the largest subunit. Pol III is composed of mobile elements and rpc2 is part of the core element with the central large cleft and probably a clamp element that moves to open and close the cleft. This Dictyostelium discoideum (Social amoeba) protein is DNA-directed RNA polymerase III subunit rpc2 (polr3b).